The following is a 1443-amino-acid chain: Lysophospholipase NTE1 (1443 aa).

Residues 1–59 are Lumenal-facing; the sequence is MEEELAIEDLPRLTGTVSLNNGLLHSIYNETTVFKILRWSLVEIPKYILKLMSKNLEIN. Residues 60–80 form a helical membrane-spanning segment; it reads LNVSSILIITLLIAAGILVIV. The Cytoplasmic portion of the chain corresponds to 81 to 1443; that stretch reads RYKFLTGYSE…RIKMYRRNTM (1363 aa). Residues 103–118 are compositionally biased toward polar residues; it reads ALGQQSTNYPKSTSSG. 2 disordered regions span residues 103 to 122 and 199 to 251; these read ALGQ…LFVE and KYDE…GKMH. Residues 210–235 show a composition bias toward acidic residues; sequence EGEEADEDDEEEEKEVGDDGDDEMDV. Residues 619–750 and 746–871 each bind a nucleoside 3',5'-cyclic phosphate; these read LYKR…LKSL and KLKS…VASK. One can recognise a PNPLA domain in the interval 1136-1300; sequence LVLGGGGSRG…LDNLPVMEMK (165 aa). The short motif at 1140 to 1145 is the GXGXXG element; sequence GGGSRG. The short motif at 1167-1171 is the GXSXG element; the sequence is GTSIG. Ser-1169 serves as the catalytic Nucleophile. Asp-1287 functions as the Proton acceptor in the catalytic mechanism. A DGA/G motif is present at residues 1287–1289; that stretch reads DGG.

This sequence belongs to the NTE family.

It localises to the endoplasmic reticulum membrane. The catalysed reaction is a 1-acyl-sn-glycero-3-phosphocholine + H2O = sn-glycerol 3-phosphocholine + a fatty acid + H(+). With respect to regulation, inhibited by organophosphorus esters. In terms of biological role, intracellular phospholipase B that catalyzes the double deacylation of phosphatidylcholine (PC) to glycerophosphocholine (GroPCho). Plays an important role in membrane lipid homeostasis. Responsible for the rapid PC turnover in response to inositol, elevated temperatures, or when choline is present in the growth medium. This chain is Lysophospholipase NTE1 (NTE1), found in Lodderomyces elongisporus (strain ATCC 11503 / CBS 2605 / JCM 1781 / NBRC 1676 / NRRL YB-4239) (Yeast).